Consider the following 93-residue polypeptide: Small hydrophobic protein (93 aa).

Transmembrane regions (helical) follow at residues 5–25 (LIII…VLAY) and 32–52 (AFGP…IYFP).

It is found in the membrane. The polypeptide is Small hydrophobic protein (Tupaia virus (isolate Tupaia/Thailand/-/1986) (TUPV)).